We begin with the raw amino-acid sequence, 74 residues long: U2-sicaritoxin-Sdo1a (74 aa).

The N-terminal stretch at 1-20 (MKLSFCFFLCAIVLFSFAEA) is a signal peptide. Residues 21-39 (RINPNQLKRLRELVRDDEP) constitute a propeptide that is removed on maturation. 3 cysteine pairs are disulfide-bonded: cysteine 42–cysteine 59, cysteine 49–cysteine 62, and cysteine 58–cysteine 71.

Expressed by the venom gland.

Its subcellular location is the secreted. In Hexophthalma dolichocephala (Afrotropical spider), this protein is U2-sicaritoxin-Sdo1a.